Reading from the N-terminus, the 634-residue chain is Probable sulfate transporter 3.5 (634 aa).

Residues 1–12 are compositionally biased toward polar residues; sequence MENTITSSTSSP. Positions 1–25 are disordered; sequence MENTITSSTSSPKGRGVNFSTPRGF. Topologically, residues 1 to 81 are cytoplasmic; sequence MENTITSSTS…KYDMQKLKYD (81 aa). Residues 82–102 form a helical membrane-spanning segment; the sequence is VLAGITITSLAVPQGISYAKL. Residues 103–104 are Extracellular-facing; that stretch reads AS. Residues 105 to 125 form a helical membrane-spanning segment; it reads IPPIIGLYSSFVPPFVYAVFG. The Cytoplasmic portion of the chain corresponds to 126 to 130; sequence SSNNL. A helical transmembrane segment spans residues 131 to 151; the sequence is AVGTVAACSLLIAETFGEEMI. The Extracellular segment spans residues 152–158; that stretch reads KNEPELY. Residues 159–179 form a helical membrane-spanning segment; the sequence is LHLIFTATLITGLFQFAMGFL. The Cytoplasmic segment spans residues 180–195; that stretch reads RLGILVDFLSHSTITG. Residues 196–216 traverse the membrane as a helical segment; the sequence is FMGGTAIIILLQQLKGIFGLV. The Extracellular portion of the chain corresponds to 217–239; that stretch reads HFTHKTDVVSVLHSILDNRAEWK. Residues 240-260 form a helical membrane-spanning segment; the sequence is WQSTLAGVCFLVFLQSTRYIK. Residues 261-265 are Cytoplasmic-facing; sequence QRYPK. A helical membrane pass occupies residues 266–286; sequence LFWVSAMGPMVVVVVGCVVAY. The Extracellular portion of the chain corresponds to 287–321; sequence LVKGTAHGIATVGPLKKGLNPPSIQLLNFDSKYLG. Residues 322 to 342 form a helical membrane-spanning segment; sequence MVFKAGIVTGLIALAEGIAIG. The Cytoplasmic segment spans residues 343–358; the sequence is RSFAVMKNEQTDGNKE. A helical membrane pass occupies residues 359-379; sequence MIAFGLMNVIGSFTSCYLTTG. Residues 380–395 lie on the Extracellular side of the membrane; the sequence is PFSKTAVNYNAGTKTP. The helical transmembrane segment at 396-416 threads the bilayer; sequence MSNVVMGVCMMLVLLFLAPLF. The Cytoplasmic segment spans residues 417–420; the sequence is SYTP. A helical membrane pass occupies residues 421-441; that stretch reads LVGLSAIIMSAMLGLINYEEM. At 442–458 the chain is on the extracellular side; sequence YHLFKVDKFDFLVCMSA. The chain crosses the membrane as a helical span at residues 459–479; that stretch reads FFGVSFLSMDYGLIISVGFSI. Over 480 to 634 the chain is Cytoplasmic; sequence VRALLYVARP…FNLTTTKPEV (155 aa). Residues 508 to 623 form the STAS domain; the sequence is QYPASEEMLG…LSIDDAVQAC (116 aa).

The protein belongs to the SLC26A/SulP transporter (TC 2.A.53) family.

It is found in the membrane. H(+)/sulfate cotransporter that may play a role in the regulation of sulfate assimilation. The sequence is that of Probable sulfate transporter 3.5 (SULTR3;5) from Arabidopsis thaliana (Mouse-ear cress).